The sequence spans 311 residues: NEDD4 family-interacting protein 2 (311 aa).

The tract at residues 1–133 (RRSASDAELS…PPYSSITVEA (133 aa)) is disordered. The Cytoplasmic segment spans residues 1-206 (RRSASDAELS…VEQLRVGNDG (206 aa)). A compositionally biased stretch (low complexity) spans 7–22 (AELSAGAEGATGSEAA). The span at 26 to 37 (DLGGRTRGGGRG) shows a compositional bias: gly residues. Residues 38-47 (SAAAAATTST) are compositionally biased toward low complexity. The segment covering 48-75 (REAEGAERRGDTPARKPDPEAGRMDHHQ) has biased composition (basic and acidic residues). Residues 92–101 (ESSAVEQPST) are compositionally biased toward polar residues. Residues 102–120 (SSLAAPTVEAAASAPALDP) are compositionally biased toward low complexity. The interaction with NEDD4 stretch occupies residues 123–126 (PPPY). The PPxY motif 1 signature appears at 123 to 126 (PPPY). 4 positions are modified to phosphotyrosine; by SRC: tyrosine 126, tyrosine 142, tyrosine 146, and tyrosine 152. 2 consecutive short sequence motifs (PPxY motif) follow at residues 149–152 (PPPY) and 159–161 (PTY). The chain crosses the membrane as a helical span at residues 207-227 (IFMLAFFMAFIFNWLGFCLSF). At 228-232 (CITNT) the chain is on the extracellular side. Residues 233–253 (IAGRYGAICGFGLSLIKWILI) traverse the membrane as a helical segment. The Cytoplasmic portion of the chain corresponds to 254 to 262 (VRFSDYFTG). The chain crosses the membrane as a helical span at residues 263-283 (YFNGQYWLWWIFLVLGLLLFF). The Extracellular segment spans residues 284–311 (RGFVNYLKVRNMSESMAAAHRTRYFFLL).

As to quaternary structure, forms heterodimers with NDFIP1. Interacts with HECT domain-containing E3 ubiquitin-protein ligases, including NEDD4. Interacts with NEDD4L. When phosphorylated at Tyr-142, interacts with SRC and LYN SH2 domain. May thus act as a scaffold that recruits SRC to NDFIP1, enhancing NDFIP1 phosphorylation. Interacts with SLC11A2/DMT1. May interact with phosphorylated EGFR. Interacts with KCNH2. Ubiquitinated by NEDD4 and NEDD4L; which does not affect turnover. Also ubiquitinated by ITCH. In terms of processing, undergoes transient tyrosine-phosphorylation following EGF stimulation, most probably catalyzed by SRC. Phosphorylation on Tyr-126, Tyr-146 and Tyr-152 are dependent on the phosphorylation on Tyr-142. Also phosphorylated by LYN and FYN. As to expression, ubiquitously expressed, with highest levels in brain, liver, kidney and testis.

It localises to the endosome membrane. It is found in the golgi apparatus membrane. The protein localises to the endosome. The protein resides in the multivesicular body membrane. Activates HECT domain-containing E3 ubiquitin-protein ligases, including ITCH, NEDD4, NEDD4L, SMURF2, WWP1 and WWP2, and consequently modulates the stability of their targets. As a result, may control many cellular processes. Recruits ITCH, NEDD4 and SMURF2 to endosomal membranes. Negatively regulates KCNH2 potassium channel activity by decreasing its cell-surface expression and interfering with channel maturation through recruitment of NEDD4L to the Golgi apparatus and multivesicular body where it mediates KCNH2 degradation. May modulate EGFR signaling. Together with NDFIP1, limits the cytokine signaling and expansion of effector Th2 T-cells by promoting degradation of JAK1, probably by ITCH- and NEDD4L-mediated ubiquitination. This Mus musculus (Mouse) protein is NEDD4 family-interacting protein 2 (Ndfip2).